The chain runs to 360 residues: DNA replication and repair protein RecF (360 aa).

30-37 contacts ATP; it reads GHNGSGKT.

This sequence belongs to the RecF family.

The protein localises to the cytoplasm. Its function is as follows. The RecF protein is involved in DNA metabolism; it is required for DNA replication and normal SOS inducibility. RecF binds preferentially to single-stranded, linear DNA. It also seems to bind ATP. The sequence is that of DNA replication and repair protein RecF from Shewanella sediminis (strain HAW-EB3).